The following is a 281-amino-acid chain: Very long chain fatty acid elongase 7 (281 aa).

Alanine 2 carries the post-translational modification N-acetylalanine. Topologically, residues 2–27 are lumenal; the sequence is AFSDLTSRTVRLYDNWIKDADPRVED. Residues 28 to 48 form a helical membrane-spanning segment; the sequence is WLLMSSPLPQTIILGFYVYFV. Residues 49 to 66 are Cytoplasmic-facing; that stretch reads TSLGPKLMENRKPFELKK. A helical membrane pass occupies residues 67 to 87; sequence VMITYNFSIVLFSVYMFYEFI. Residues 88–115 lie on the Lumenal side of the membrane; that stretch reads MSGWGTGYSFRCDIVDYSQSPTALRMVR. A disulfide bond links cysteine 99 and cysteine 231. The chain crosses the membrane as a helical span at residues 116–136; sequence TCWLYYFSKFIELLDTIFFIL. 3-oxoeicosanoyl-CoA contacts are provided by lysine 124, arginine 137, lysine 139, glutamine 142, and histidine 147. Over 137–142 the chain is Cytoplasmic; that stretch reads RKKNSQ. A helical membrane pass occupies residues 143-162; that stretch reads VTFLHVFHHTIMPWTWWFGV. The HxxHH motif signature appears at 147-151; the sequence is HVFHH. Residue histidine 150 is the Nucleophile of the active site. Topologically, residues 163–171 are lumenal; it reads KFAAGGLGT. Residues 172-194 traverse the membrane as a helical segment; the sequence is FHAFLNTAVHVVMYSYYGLCALG. Residues tyrosine 187, lysine 204, threonine 208, and glutamine 211 each coordinate 3-oxoeicosanoyl-CoA. Topologically, residues 195 to 206 are cytoplasmic; it reads PDYQKYLWWKKY. The chain crosses the membrane as a helical span at residues 207–227; that stretch reads LTSLQLIQFVLITIHISQFFF. At 228-236 the chain is on the lumenal side; it reads MEDCKYQFP. A helical transmembrane segment spans residues 237–257; it reads VFQYIIMSYGCIFLLLFLHFW. Topologically, residues 258–281 are cytoplasmic; that stretch reads YRAYTKGQRLPKTVKHGICKNKDH. 3-oxoeicosanoyl-CoA is bound at residue arginine 266. The short motif at 277-281 is the Di-lysine motif element; it reads KNKDH.

It belongs to the ELO family. ELOVL7 subfamily. Homodimer. Interacts with TECR.

It is found in the endoplasmic reticulum membrane. The catalysed reaction is a very-long-chain acyl-CoA + malonyl-CoA + H(+) = a very-long-chain 3-oxoacyl-CoA + CO2 + CoA. The enzyme catalyses eicosanoyl-CoA + malonyl-CoA + H(+) = 3-oxodocosanoyl-CoA + CO2 + CoA. It carries out the reaction (5Z,8Z,11Z,14Z)-eicosatetraenoyl-CoA + malonyl-CoA + H(+) = (7Z,10Z,13Z,16Z)-3-oxodocosatetraenoyl-CoA + CO2 + CoA. It catalyses the reaction (6Z,9Z,12Z)-octadecatrienoyl-CoA + malonyl-CoA + H(+) = (8Z,11Z,14Z)-3-oxoeicosatrienoyl-CoA + CO2 + CoA. The catalysed reaction is (9Z,12Z)-octadecadienoyl-CoA + malonyl-CoA + H(+) = (11Z,14Z)-3-oxoicosa-11,14-dienoyl-CoA + CO2 + CoA. The enzyme catalyses (9Z)-octadecenoyl-CoA + malonyl-CoA + H(+) = 3-oxo-(11Z)-eicosenoyl-CoA + CO2 + CoA. It carries out the reaction octadecanoyl-CoA + malonyl-CoA + H(+) = 3-oxoeicosanoyl-CoA + CO2 + CoA. It catalyses the reaction hexadecanoyl-CoA + malonyl-CoA + H(+) = 3-oxooctadecanoyl-CoA + CO2 + CoA. The catalysed reaction is (9Z,12Z,15Z)-octadecatrienoyl-CoA + malonyl-CoA + H(+) = (11Z,14Z,17Z)-3-oxoeicosatrienoyl-CoA + CO2 + CoA. It participates in lipid metabolism; fatty acid biosynthesis. Catalyzes the first and rate-limiting reaction of the four reactions that constitute the long-chain fatty acids elongation cycle. This endoplasmic reticulum-bound enzymatic process allows the addition of 2 carbons to the chain of long- and very long-chain fatty acids (VLCFAs) per cycle. Condensing enzyme with higher activity toward C18 acyl-CoAs, especially C18:3(n-3) acyl-CoAs and C18:3(n-6)-CoAs. Also active toward C20:4-, C18:0-, C18:1-, C18:2- and C16:0-CoAs, and weakly toward C20:0-CoA. Little or no activity toward C22:0-, C24:0-, or C26:0-CoAs. May participate in the production of saturated and polyunsaturated VLCFAs of different chain lengths that are involved in multiple biological processes as precursors of membrane lipids and lipid mediators. The sequence is that of Very long chain fatty acid elongase 7 from Bos taurus (Bovine).